The chain runs to 432 residues: Nematocyst expressed protein 3-like (432 aa).

A signal peptide spans 1–19 (MRVVYLVLVVAVIIAITEA). Disulfide bonds link Cys-52–Cys-91, Cys-59–Cys-84, Cys-73–Cys-88, Cys-125–Cys-140, Cys-157–Cys-176, and Cys-166–Cys-180. ShKT domains follow at residues 59–91 (CKAF…CKLC), 107–143 (VVRA…CMLC), and 149–183 (GPCD…CDVY). The span at 235–313 (GAQYPAATAA…PEAAPSEPEA (79 aa)) shows a compositional bias: low complexity. Residues 235-432 (GAQYPAATAA…KSKSGHKRHH (198 aa)) are disordered. Pro residues predominate over residues 314–330 (APAPAPEMAPAPAPEMA). Over residues 331–408 (PAPEAASAPA…AAPSEQPMPG (78 aa)) the composition is skewed to low complexity. Positions 409-432 (KKSKSKPSKRKGVKKSKSGHKRHH) are enriched in basic residues.

The protein belongs to the NEP3 family. Nematocytes. In late planulae, transcripts are found throughout the ectoderm in nematocytes, with high concentration of expressing cells in the oral pole. In primary polyps, is expressed in nematocytes in the body wall and physa ectoderm and in the upper and lower pharynx.

It is found in the nematocyst. The protein resides in the secreted. Probable toxin. The protein is Nematocyst expressed protein 3-like of Nematostella vectensis (Starlet sea anemone).